The chain runs to 567 residues: Ribulokinase (567 aa).

The protein belongs to the ribulokinase family.

It catalyses the reaction D-ribulose + ATP = D-ribulose 5-phosphate + ADP + H(+). The enzyme catalyses L-ribulose + ATP = L-ribulose 5-phosphate + ADP + H(+). The protein operates within carbohydrate degradation; L-arabinose degradation via L-ribulose; D-xylulose 5-phosphate from L-arabinose (bacterial route): step 2/3. The sequence is that of Ribulokinase from Vibrio parahaemolyticus serotype O3:K6 (strain RIMD 2210633).